A 669-amino-acid polypeptide reads, in one-letter code: Trissin receptor (669 aa).

Over residues 1-15 (MIMTMMQTVRAWQQE) the composition is skewed to polar residues. Residues 1 to 90 (MIMTMMQTVR…PTGQQPPRLP (90 aa)) form a disordered region. At 1–184 (MIMTMMQTVR…EYIFDRTDVR (184 aa)) the chain is on the extracellular side. The span at 55–74 (NQNNGSPNSSPNQSTSAFRQ) shows a compositional bias: low complexity. An N-linked (GlcNAc...) asparagine glycan is attached at asparagine 66. Over residues 79–89 (HPPTGQQPPRL) the composition is skewed to pro residues. N-linked (GlcNAc...) asparagine glycosylation is found at asparagine 120 and asparagine 130. Residues 185-205 (IIFITLYTLVFCCCFFGNLLV) form a helical membrane-spanning segment. The Cytoplasmic portion of the chain corresponds to 206 to 217 (ILVVTLSRRLRS). The helical transmembrane segment at 218–238 (ITNFFLANLAFADFCVGLFCV) threads the bilayer. Residues 239-269 (MQNLSIYLIESWVFGEFLCRMYQFVHSLSYT) are Extracellular-facing. Asparagine 241 carries an N-linked (GlcNAc...) asparagine glycan. A disulfide bond links cysteine 257 and cysteine 340. Residues 270–290 (ASIFILVVICMERYFAIVHPI) form a helical membrane-spanning segment. At 291–302 (TCKQILTAARLR) the chain is on the cytoplasmic side. The chain crosses the membrane as a helical span at residues 303–323 (MVIVTVWITSAVYSTPKFVFS). Over 324–350 (KTIKNIHTQDGQEEEICVLDREMFNSK) the chain is Extracellular. Residues 351–371 (LLDMINFVLLYVMPLLVMTVL) form a helical membrane-spanning segment. Residues 372-552 (YSKIAIALWR…SSNVLRARRG (181 aa)) are Cytoplasmic-facing. Residues 390–401 (VVQHQHQQPQQP) are compositionally biased toward low complexity. Disordered regions lie at residues 390 to 481 (VVQH…RGVS) and 515 to 537 (AHHQ…AGAT). Basic residues predominate over residues 414–429 (MYHHHPHHHHHHHQHH). Residues 441 to 454 (VGVGLGGGGGGGPG) are compositionally biased toward gly residues. The segment covering 455 to 470 (PSLASGGSSTTSLSRK) has biased composition (low complexity). The segment covering 524 to 534 (SVGGGSGGAGA) has biased composition (gly residues). A helical membrane pass occupies residues 553–573 (VVRMLIIFVLTFALCNLPYHA). Over 574–595 (RKMWQYWSRSYRGDSNFNALLT) the chain is Extracellular. Residues 596–616 (PLTFLVTYFNSGVNPLLYAFL) traverse the membrane as a helical segment. Residues 617–669 (SRNFRKGMKELLLCSWKKGKGKSSSNSSMHHKRKALQTHSLPTDTTHIGNEQL) lie on the Cytoplasmic side of the membrane. The interval 635–669 (GKGKSSSNSSMHHKRKALQTHSLPTDTTHIGNEQL) is disordered. Residues 653 to 669 (QTHSLPTDTTHIGNEQL) show a composition bias toward polar residues.

This sequence belongs to the G-protein coupled receptor 1 family.

It localises to the cell membrane. G-protein coupled receptor which is activated by the Trissin peptide in vitro, leading to increased intracellular calcium ion levels. The chain is Trissin receptor from Drosophila melanogaster (Fruit fly).